A 1021-amino-acid chain; its full sequence is Multidrug resistance protein MdtC (1021 aa).

The Cytoplasmic portion of the chain corresponds to 1–6 (MKFFAL). The chain crosses the membrane as a helical span at residues 7–29 (FIYRPVATILLSVAITLCGILGF). Residues 30 to 335 (RMLPVAPLPQ…TIRASLEEVE (306 aa)) are Periplasmic-facing. Residues 336–353 (QTLIISVALVILVVFLFL) traverse the membrane as a helical segment. Residues 354 to 359 (RSGRAT) are Cytoplasmic-facing. The helical transmembrane segment at 360-379 (IIPAVAVPVSLIGTFAAMYL) threads the bilayer. Residues 380–388 (CGFSLNNLS) lie on the Periplasmic side of the membrane. Residues 389–411 (LMALTIATGFVVDDAIVVLENIA) traverse the membrane as a helical segment. Residues 412-430 (RHLEAGMKPLQAALQGTRE) are Cytoplasmic-facing. The helical transmembrane segment at 431 to 453 (VGFTVLSMSLSLVAVFLPLLLMG) threads the bilayer. At 454–467 (GLPGRLLREFAVTL) the chain is on the periplasmic side. Residues 468-490 (SVAIGISLLVSLTLTPMMCGWML) form a helical membrane-spanning segment. Over 491-848 (KASKPREQKR…QVFQETMNSQ (358 aa)) the chain is Cytoplasmic. The chain crosses the membrane as a helical span at residues 849–871 (VILIIAAIATVYIVLGILYESYV). Residues 872 to 890 (HPLTILSTLPSAGVGALLA) lie on the Periplasmic side of the membrane. Residues 891–913 (LELFNAPFSLIALIGIMLLIGIV) form a helical membrane-spanning segment. At 914–943 (KKNAIMMVDFALEAQRHGNLTPQEAIFQAC) the chain is on the cytoplasmic side. Residues 944–966 (LLRFRPIMMTTLAALFGALPLVL) form a helical membrane-spanning segment. The Periplasmic portion of the chain corresponds to 967–980 (SGGDGSELRQPLEI). A helical transmembrane segment spans residues 981–1003 (TIVGGLVMSQLLTLYTTPVVYLF). Residues 1004-1021 (FDRLRLRFSRKPKQTVTE) are Cytoplasmic-facing.

The protein belongs to the resistance-nodulation-cell division (RND) (TC 2.A.6) family. MdtC subfamily. In terms of assembly, part of a tripartite efflux system composed of MdtA, MdtB and MdtC. MdtC forms a heteromultimer with MdtB.

The protein resides in the cell inner membrane. The sequence is that of Multidrug resistance protein MdtC from Shigella flexneri.